Here is a 671-residue protein sequence, read N- to C-terminus: Leucine aminopeptidase 2 (671 aa).

Substrate-binding positions include 184 to 186 and 311 to 316; these read QLE and PYGGME. His-340 serves as a coordination point for Zn(2+). The active-site Proton acceptor is Glu-341. Zn(2+)-binding residues include His-344 and Glu-363. Residue Tyr-429 is the Proton donor of the active site.

The protein belongs to the peptidase M1 family. It depends on Zn(2+) as a cofactor.

It is found in the cytoplasm. Its subcellular location is the nucleus. The catalysed reaction is an epoxide + H2O = an ethanediol. Inhibited by 3-(4-benzyloxyphenyl)-2-(R)-amino-1-propanethiol (thioamine) and N-hydroxy-N-(2-(S)-amino-3-(4-benzyloxyphenyl)propyl)-5-carboxypen-tanamide (hydroxamic acid). The aminopeptidase activity is stimulated by LTA(4). Its function is as follows. Aminopeptidase that preferentially cleaves di- and tripeptides. Also has low epoxide hydrolase activity (in vitro). Can hydrolyze the epoxide leukotriene LTA(4) but it forms preferentially 5,6-dihydroxy-7,9,11,14-eicosatetraenoic acid rather than the cytokine leukotriene B(4) as the product compared to the homologous mammalian enzyme (in vitro). The chain is Leucine aminopeptidase 2 from Saccharomyces cerevisiae (strain YJM789) (Baker's yeast).